The following is a 201-amino-acid chain: Small ribosomal subunit protein uS4c (201 aa).

A disordered region spans residues 20–44; that stretch reads GLTSKRPRAGSDLRNQSRSGKKSQY. Positions 89–152 constitute an S4 RNA-binding domain; that stretch reads MRLDNILFRL…NSRTLVQNLL (64 aa).

The protein belongs to the universal ribosomal protein uS4 family. Part of the 30S ribosomal subunit. Contacts protein S5. The interaction surface between S4 and S5 is involved in control of translational fidelity.

It is found in the plastid. The protein resides in the chloroplast. Its function is as follows. One of the primary rRNA binding proteins, it binds directly to 16S rRNA where it nucleates assembly of the body of the 30S subunit. Functionally, with S5 and S12 plays an important role in translational accuracy. This chain is Small ribosomal subunit protein uS4c (rps4), found in Aethionema cordifolium (Lebanon stonecress).